Consider the following 274-residue polypeptide: Large ribosomal subunit protein uL2 (274 aa).

Residues alanine 224 to lysine 254 form a disordered region. Positions aspartate 229 to threonine 239 are enriched in basic and acidic residues.

It belongs to the universal ribosomal protein uL2 family. Part of the 50S ribosomal subunit. Forms a bridge to the 30S subunit in the 70S ribosome.

In terms of biological role, one of the primary rRNA binding proteins. Required for association of the 30S and 50S subunits to form the 70S ribosome, for tRNA binding and peptide bond formation. It has been suggested to have peptidyltransferase activity; this is somewhat controversial. Makes several contacts with the 16S rRNA in the 70S ribosome. The chain is Large ribosomal subunit protein uL2 from Leptothrix cholodnii (strain ATCC 51168 / LMG 8142 / SP-6) (Leptothrix discophora (strain SP-6)).